A 3147-amino-acid polypeptide reads, in one-letter code: Bassianolide nonribosomal cyclodepsipeptide synthetase (3147 aa).

The segment covering 1 to 12 (MEPPNNANTGQL) has biased composition (polar residues). Residues 1-23 (MEPPNNANTGQLGPTLPNGTVDL) form a disordered region. A condensation 1 region spans residues 69 to 454 (HVVYEIPEDV…INKLQSTDGS (386 aa)). The tract at residues 495-887 (DDTPNKPAVC…GRMDSQVKIR (393 aa)) is adenylation 1. Positions 1015 to 1091 (PDASAGVTKL…SLQAAIGGSS (77 aa)) constitute a Carrier 1 domain. Ser-1052 bears the O-(pantetheine 4'-phosphoryl)serine mark. Residues 1109–1538 (SYSQGRLWFL…QTLISVVPLT (430 aa)) form a condensation 2 region. An adenylation 2 region spans residues 1567-1973 (FATQVASYPD…GRMDFQFKIR (407 aa)). The S-adenosyl-L-methionine-dependent N-methyltransferase (MT) stretch occupies residues 2041–2181 (TYTELDTVSS…FPTRDYLEQV (141 aa)). Carrier domains are found at residues 2515–2589 (FPLS…RQQL) and 2615–2689 (APTT…EVSQ). Ser-2549 and Ser-2649 each carry O-(pantetheine 4'-phosphoryl)serine. Residues 2735–3139 (QDVYLATHLQ…THLMEQVCNT (405 aa)) form a condensation 3 region.

The protein belongs to the NRP synthetase family.

Functionally, bassianolide nonribosomal synthetase that mediates the biosynthesis of bassianolide (BSL), a non-ribosomal cyclodepsipeptide that shows insecticidal and cancer cell antiproliferative activity. BSLS first catalyzes the iterative synthesis of an enzyme-bound dipeptidol monomer intermediate from D-2-hydroxyisovalerate and L-leucine before performing the condensation and cyclization of 4 dipeptidol monomers to yield the cyclic tetrameric ester bassianolide. The N-methyltransferase MT domain is responsible for the methylation of the leucine residues of bassianolide. BSLS is flexible with both the amino acid and hydroxyl acid precursors, and produces bassianolide as the major product (containing N-methyl-L-Leu), together with small amounts of beauvericin and its analogs beauvericins A-C (containing N-methyl-L-Phe). In Beauveria bassiana (strain ARSEF 2860) (White muscardine disease fungus), this protein is Bassianolide nonribosomal cyclodepsipeptide synthetase.